We begin with the raw amino-acid sequence, 288 residues long: Small ribosomal subunit protein uS3 (288 aa).

One can recognise a KH type-2 domain in the interval 38–106 (IRRMMSKGLE…QVQLNIIEVK (69 aa)). Residues 209–288 (PGRETPAEAP…TQPAETQQEG (80 aa)) form a disordered region. The span at 219–232 (SRPRRERGDRSERP) shows a compositional bias: basic and acidic residues. Over residues 249-264 (AGRAAATTIAQAAETP) the composition is skewed to low complexity. The segment covering 277–288 (AATQPAETQQEG) has biased composition (polar residues).

It belongs to the universal ribosomal protein uS3 family. Part of the 30S ribosomal subunit. Forms a tight complex with proteins S10 and S14.

Its function is as follows. Binds the lower part of the 30S subunit head. Binds mRNA in the 70S ribosome, positioning it for translation. The sequence is that of Small ribosomal subunit protein uS3 from Salinispora tropica (strain ATCC BAA-916 / DSM 44818 / JCM 13857 / NBRC 105044 / CNB-440).